The primary structure comprises 475 residues: Ribulose bisphosphate carboxylase large chain (475 aa).

A propeptide spanning residues 1-2 is cleaved from the precursor; sequence MS. P3 carries the post-translational modification N-acetylproline. At K14 the chain carries N6,N6,N6-trimethyllysine. Substrate is bound by residues N123 and T173. The Proton acceptor role is filled by K175. K177 provides a ligand contact to substrate. Mg(2+) is bound by residues K201, D203, and E204. N6-carboxylysine is present on K201. The active-site Proton acceptor is H294. Residues R295, H327, and S379 each contribute to the substrate site.

It belongs to the RuBisCO large chain family. Type I subfamily. Heterohexadecamer of 8 large chains and 8 small chains; disulfide-linked. The disulfide link is formed within the large subunit homodimers. Mg(2+) serves as cofactor. Post-translationally, the disulfide bond which can form in the large chain dimeric partners within the hexadecamer appears to be associated with oxidative stress and protein turnover.

The protein localises to the plastid. The protein resides in the chloroplast. The enzyme catalyses 2 (2R)-3-phosphoglycerate + 2 H(+) = D-ribulose 1,5-bisphosphate + CO2 + H2O. The catalysed reaction is D-ribulose 1,5-bisphosphate + O2 = 2-phosphoglycolate + (2R)-3-phosphoglycerate + 2 H(+). Functionally, ruBisCO catalyzes two reactions: the carboxylation of D-ribulose 1,5-bisphosphate, the primary event in carbon dioxide fixation, as well as the oxidative fragmentation of the pentose substrate in the photorespiration process. Both reactions occur simultaneously and in competition at the same active site. The chain is Ribulose bisphosphate carboxylase large chain from Mesostigma viride (Green alga).